We begin with the raw amino-acid sequence, 470 residues long: Putative gustatory receptor 28b (470 aa).

Over 1-76 the chain is Cytoplasmic; sequence MDIEMAKEPV…KTGKKAIKKT (76 aa). Residues 77–97 traverse the membrane as a helical segment; the sequence is IFGYINGIMHIAMFVFAYSLT. The Extracellular portion of the chain corresponds to 98–119; the sequence is IYNNCESVASYFFRSRITYFGD. A helical transmembrane segment spans residues 120 to 140; it reads LMQIVSGFIGVTVIYLTAFVP. The Cytoplasmic portion of the chain corresponds to 141-175; sequence NHRLERCLQKFHTMDVQLQTVGVKIMYSKVLRFSY. Residues 176–196 form a helical membrane-spanning segment; the sequence is MVLISMFLVNVLFTGGTFSVL. Topologically, residues 197 to 204 are extracellular; the sequence is YSSEVAPT. A helical transmembrane segment spans residues 205–225; it reads MALHFTFLIQHTVIAIAIALF. At 226 to 309 the chain is on the cytoplasmic side; sequence SCFTYLVEMR…ATANKYFTYQ (84 aa). A helical membrane pass occupies residues 310–330; the sequence is LLTIISIAFLIIVFDAYYVLE. Residues 331 to 346 lie on the Extracellular side of the membrane; it reads TLLGKSKRESKFKTVE. A helical transmembrane segment spans residues 347-367; the sequence is FVTFFSCQMILYLIAIISIVE. Over 368–423 the chain is Cytoplasmic; the sequence is GSNRAIKKSEKTGGIVHSLLNKTKSAEVKEKLQQFSMQLMHLKINFTAAGLFNIDR. The chain crosses the membrane as a helical span at residues 424-444; that stretch reads TLYFTISGALTTYLIILLQFT. The Extracellular segment spans residues 445 to 470; sequence SNSPNNGYGNGSSCCETFNNMTNHTL. Residues Asn-454, Asn-464, and Asn-467 are each glycosylated (N-linked (GlcNAc...) asparagine).

The protein belongs to the insect chemoreceptor superfamily. Gustatory receptor (GR) family. Gr66a subfamily. Isoforms A and E have taste neuron-specific expression restricted to the labial palps, the internal taste organs in the pharynx, and the legs. In addition to expression in a large number of taste neurons, isoform A is also expressed in a few nonchemosensory neurons, including the campaniform sensilla of the wing, leg stretch receptors, and multiple dendritic neurons in the abdomen. Isoform B is the only receptor not expressed in gustatory receptor neurons in the labellum. We observe expression of this receptor in a single large cell at the base of each maxillary palp, in campaniform sensilla of the wing, and multiple dendritic neurons in the abdomen. Isoform C is expressed by many gustatory receptor neurons in the labial palps, the pharyngeal taste clusters, and taste neurons in the legs. In addition, isoform C expressed in a single cell at the base of the maxillary palps, neurons in the Johnston's organ (JO), campaniform sensilla of the wing, stretch receptors and the femoral chordotonal organ of the legs, and multiple dendritic neurons in the abdomen. Isoform D is expressed in a small number of gustatory receptor neurons in the labial palps, the ventral cibarial sense organ (VCSO), and legs. Atypical expression is observed in three neurons in the arista, campaniform sensilla of the wing, stretch and femoral chordotonal organ receptors in the legs, and multiple dendritic neurons in the abdomen. In larvae, Isoform A is expressed in neurons of the terminal external chemosensory organ and the dorsal external chemosensory organ; and isoform E is expressed in neurons of the terminal external chemosensory organ.

The protein resides in the cell membrane. In terms of biological role, probable gustatory receptor which mediates acceptance or avoidance behavior, depending on its substrates. Atypical expression also suggests nongustatory roles in the nervous system and tissues involved in proprioception, hygroreception, and other sensory modalities. It is also possible that it has chemosensory roles in the detection of internal ligands. The sequence is that of Putative gustatory receptor 28b (Gr28b) from Drosophila melanogaster (Fruit fly).